The sequence spans 263 residues: uncharacterized protein (263 aa).

31 to 38 contacts ATP; that stretch reads GPTGSGKT.

It belongs to the CbbQ/NirQ/NorQ/GpvN family.

This is an uncharacterized protein from Staphylococcus aureus (strain bovine RF122 / ET3-1).